A 338-amino-acid chain; its full sequence is Glycerol-3-phosphate dehydrogenase [NAD(P)+] (338 aa).

Positions 12, 13, 34, and 110 each coordinate NADPH. 3 residues coordinate sn-glycerol 3-phosphate: lysine 110, glycine 141, and serine 143. Alanine 145 lines the NADPH pocket. Lysine 196, aspartate 249, serine 259, arginine 260, and asparagine 261 together coordinate sn-glycerol 3-phosphate. Residue lysine 196 is the Proton acceptor of the active site. Arginine 260 is an NADPH binding site. The NADPH site is built by valine 284 and glutamate 286.

This sequence belongs to the NAD-dependent glycerol-3-phosphate dehydrogenase family.

It is found in the cytoplasm. It catalyses the reaction sn-glycerol 3-phosphate + NAD(+) = dihydroxyacetone phosphate + NADH + H(+). It carries out the reaction sn-glycerol 3-phosphate + NADP(+) = dihydroxyacetone phosphate + NADPH + H(+). It functions in the pathway membrane lipid metabolism; glycerophospholipid metabolism. Its function is as follows. Catalyzes the reduction of the glycolytic intermediate dihydroxyacetone phosphate (DHAP) to sn-glycerol 3-phosphate (G3P), the key precursor for phospholipid synthesis. This chain is Glycerol-3-phosphate dehydrogenase [NAD(P)+], found in Ligilactobacillus salivarius (strain UCC118) (Lactobacillus salivarius).